The primary structure comprises 808 residues: Protein translocase subunit SecA (808 aa).

ATP-binding positions include Q87, 105–109, and D493; that span reads GEGKT.

It belongs to the SecA family. In terms of assembly, monomer and homodimer. Part of the essential Sec protein translocation apparatus which comprises SecA, SecYEG and auxiliary proteins SecDF. Other proteins may also be involved.

Its subcellular location is the cell membrane. The protein localises to the cytoplasm. The enzyme catalyses ATP + H2O + cellular proteinSide 1 = ADP + phosphate + cellular proteinSide 2.. Functionally, part of the Sec protein translocase complex. Interacts with the SecYEG preprotein conducting channel. Has a central role in coupling the hydrolysis of ATP to the transfer of proteins into and across the cell membrane, serving as an ATP-driven molecular motor driving the stepwise translocation of polypeptide chains across the membrane. This chain is Protein translocase subunit SecA, found in Mycoplasma pneumoniae (strain ATCC 29342 / M129 / Subtype 1) (Mycoplasmoides pneumoniae).